The sequence spans 354 residues: FAD synthetase 1, chloroplastic (354 aa).

Residues 1 to 75 constitute a chloroplast transit peptide; it reads MLCGGSRASV…SQGDDHPELS (75 aa). The disordered stretch occupies residues 228-248; sequence SVNTEEEDSKSKERGQVSSTR.

The cofactor is Mg(2+).

The protein resides in the plastid. The protein localises to the chloroplast. The enzyme catalyses FMN + ATP + H(+) = FAD + diphosphate. The protein operates within cofactor biosynthesis; FAD biosynthesis; FAD from FMN: step 1/1. Functionally, catalyzes the adenylation of flavin mononucleotide (FMN) to form flavin adenine dinucleotide (FAD) coenzyme. This chain is FAD synthetase 1, chloroplastic, found in Arabidopsis thaliana (Mouse-ear cress).